The following is a 333-amino-acid chain: Electron transfer flavoprotein subunit alpha, mitochondrial (333 aa).

The N-terminal 19 residues, 1–19, are a transit peptide targeting the mitochondrion; sequence MFRAAAPGQLRRATSLLRF. The tract at residues 20 to 204 is domain I; sequence QSTLVIAEHA…GISEWLDQKL (185 aa). K59 carries the N6-acetyllysine; alternate modification. The residue at position 59 (K59) is an N6-succinyllysine; alternate. K62 carries the post-translational modification N6-acetyllysine. K69 bears the N6-acetyllysine; alternate mark. K69 bears the N6-succinyllysine; alternate mark. At K75 the chain carries N6-acetyllysine. The residue at position 85 (K85) is an N6-acetyllysine; alternate. The residue at position 85 (K85) is an N6-succinyllysine; alternate. Position 93 is a phosphothreonine (T93). K101 and K139 each carry N6-acetyllysine. S140 bears the Phosphoserine mark. The residue at position 158 (K158) is an N6-acetyllysine; alternate. K158 is modified (N6-succinyllysine; alternate). K164 bears the N6-acetyllysine mark. An N6-succinyllysine modification is found at K187. K203 is subject to N6-acetyllysine; alternate. K203 is modified (N6-succinyllysine; alternate). The segment at 205–333 is domain II; sequence TKSDRPELTG…PEMTELLKKK (129 aa). K216 carries the post-translational modification N6-succinyllysine. R223 serves as a coordination point for FAD. 2 positions are modified to N6-acetyllysine; alternate: K226 and K232. An N6-succinyllysine; alternate mark is found at K226 and K232. Residues S248, 263-266, 281-286, and N300 each bind FAD; these read VGQT and SGAIQH. At K301 the chain carries N6-succinyllysine. FAD is bound at residue 318–319; that stretch reads DL.

Belongs to the ETF alpha-subunit/FixB family. As to quaternary structure, heterodimer composed of ETFA and ETFB. Identified in a complex that contains ETFA, ETFB and ETFRF1. Interaction with ETFRF1 promotes dissociation of the bound FAD and loss of electron transfer activity. Interacts with TASOR. FAD serves as cofactor.

The protein localises to the mitochondrion matrix. In terms of biological role, heterodimeric electron transfer flavoprotein that accepts electrons from several mitochondrial dehydrogenases, including acyl-CoA dehydrogenases, glutaryl-CoA and sarcosine dehydrogenase. It transfers the electrons to the main mitochondrial respiratory chain via ETF-ubiquinone oxidoreductase (ETF dehydrogenase). Required for normal mitochondrial fatty acid oxidation and normal amino acid metabolism. The polypeptide is Electron transfer flavoprotein subunit alpha, mitochondrial (ETFA) (Bos taurus (Bovine)).